Consider the following 337-residue polypeptide: tRNA N6-adenosine threonylcarbamoyltransferase (337 aa).

Fe cation contacts are provided by His111 and His115. Substrate-binding positions include 134–138 (LVSGG), Asp167, Gly180, and Asn272. Asp300 contacts Fe cation.

Belongs to the KAE1 / TsaD family. It depends on Fe(2+) as a cofactor.

Its subcellular location is the cytoplasm. The catalysed reaction is L-threonylcarbamoyladenylate + adenosine(37) in tRNA = N(6)-L-threonylcarbamoyladenosine(37) in tRNA + AMP + H(+). Required for the formation of a threonylcarbamoyl group on adenosine at position 37 (t(6)A37) in tRNAs that read codons beginning with adenine. Is involved in the transfer of the threonylcarbamoyl moiety of threonylcarbamoyl-AMP (TC-AMP) to the N6 group of A37, together with TsaE and TsaB. TsaD likely plays a direct catalytic role in this reaction. This is tRNA N6-adenosine threonylcarbamoyltransferase from Yersinia pseudotuberculosis serotype I (strain IP32953).